A 324-amino-acid polypeptide reads, in one-letter code: Glyoxylate/hydroxypyruvate reductase B (324 aa).

Active-site residues include R237 and E266. H285 functions as the Proton donor in the catalytic mechanism.

The protein belongs to the D-isomer specific 2-hydroxyacid dehydrogenase family. GhrB subfamily. Homodimer.

The protein localises to the cytoplasm. It carries out the reaction glycolate + NADP(+) = glyoxylate + NADPH + H(+). The enzyme catalyses (R)-glycerate + NAD(+) = 3-hydroxypyruvate + NADH + H(+). The catalysed reaction is (R)-glycerate + NADP(+) = 3-hydroxypyruvate + NADPH + H(+). Its function is as follows. Catalyzes the NADPH-dependent reduction of glyoxylate and hydroxypyruvate into glycolate and glycerate, respectively. The chain is Glyoxylate/hydroxypyruvate reductase B from Salmonella paratyphi B (strain ATCC BAA-1250 / SPB7).